Here is a 97-residue protein sequence, read N- to C-terminus: Aspartyl/glutamyl-tRNA(Asn/Gln) amidotransferase subunit C (97 aa).

This sequence belongs to the GatC family. Heterotrimer of A, B and C subunits.

The catalysed reaction is L-glutamyl-tRNA(Gln) + L-glutamine + ATP + H2O = L-glutaminyl-tRNA(Gln) + L-glutamate + ADP + phosphate + H(+). The enzyme catalyses L-aspartyl-tRNA(Asn) + L-glutamine + ATP + H2O = L-asparaginyl-tRNA(Asn) + L-glutamate + ADP + phosphate + 2 H(+). In terms of biological role, allows the formation of correctly charged Asn-tRNA(Asn) or Gln-tRNA(Gln) through the transamidation of misacylated Asp-tRNA(Asn) or Glu-tRNA(Gln) in organisms which lack either or both of asparaginyl-tRNA or glutaminyl-tRNA synthetases. The reaction takes place in the presence of glutamine and ATP through an activated phospho-Asp-tRNA(Asn) or phospho-Glu-tRNA(Gln). This is Aspartyl/glutamyl-tRNA(Asn/Gln) amidotransferase subunit C from Listeria innocua serovar 6a (strain ATCC BAA-680 / CLIP 11262).